Reading from the N-terminus, the 185-residue chain is ATP-dependent protease subunit HslV (185 aa).

Thr-12 is an active-site residue. Na(+) contacts are provided by Ala-168, Cys-171, and Thr-174.

The protein belongs to the peptidase T1B family. HslV subfamily. As to quaternary structure, a double ring-shaped homohexamer of HslV is capped on each side by a ring-shaped HslU homohexamer. The assembly of the HslU/HslV complex is dependent on binding of ATP.

It is found in the cytoplasm. It carries out the reaction ATP-dependent cleavage of peptide bonds with broad specificity.. Allosterically activated by HslU binding. Functionally, protease subunit of a proteasome-like degradation complex believed to be a general protein degrading machinery. The polypeptide is ATP-dependent protease subunit HslV (Cereibacter sphaeroides (strain ATCC 17029 / ATH 2.4.9) (Rhodobacter sphaeroides)).